The chain runs to 196 residues: ATP-dependent Clp protease proteolytic subunit (196 aa).

Ser101 (nucleophile) is an active-site residue. His126 is an active-site residue.

Belongs to the peptidase S14 family. Component of the chloroplastic Clp protease core complex.

It is found in the plastid. Its subcellular location is the chloroplast stroma. The enzyme catalyses Hydrolysis of proteins to small peptides in the presence of ATP and magnesium. alpha-casein is the usual test substrate. In the absence of ATP, only oligopeptides shorter than five residues are hydrolyzed (such as succinyl-Leu-Tyr-|-NHMec, and Leu-Tyr-Leu-|-Tyr-Trp, in which cleavage of the -Tyr-|-Leu- and -Tyr-|-Trp bonds also occurs).. In terms of biological role, cleaves peptides in various proteins in a process that requires ATP hydrolysis. Has a chymotrypsin-like activity. Plays a major role in the degradation of misfolded proteins. This Eucalyptus globulus subsp. globulus (Tasmanian blue gum) protein is ATP-dependent Clp protease proteolytic subunit.